We begin with the raw amino-acid sequence, 448 residues long: Phosphoglucosamine mutase (448 aa).

The active-site Phosphoserine intermediate is serine 100. Mg(2+) is bound by residues serine 100, aspartate 240, aspartate 242, and aspartate 244. Phosphoserine is present on serine 100.

It belongs to the phosphohexose mutase family. The cofactor is Mg(2+). Post-translationally, activated by phosphorylation.

The enzyme catalyses alpha-D-glucosamine 1-phosphate = D-glucosamine 6-phosphate. Its function is as follows. Catalyzes the conversion of glucosamine-6-phosphate to glucosamine-1-phosphate. This chain is Phosphoglucosamine mutase, found in Bacillus cereus (strain B4264).